The sequence spans 90 residues: Small ribosomal subunit protein uS17 (90 aa).

Belongs to the universal ribosomal protein uS17 family. As to quaternary structure, part of the 30S ribosomal subunit.

Functionally, one of the primary rRNA binding proteins, it binds specifically to the 5'-end of 16S ribosomal RNA. This Acidiphilium cryptum (strain JF-5) protein is Small ribosomal subunit protein uS17.